The following is a 669-amino-acid chain: Glutamate--cysteine ligase (669 aa).

This sequence belongs to the glutamate--cysteine ligase type 3 family. As to quaternary structure, heterodimer of a catalytic heavy chain and a regulatory light chain.

It carries out the reaction L-cysteine + L-glutamate + ATP = gamma-L-glutamyl-L-cysteine + ADP + phosphate + H(+). It functions in the pathway sulfur metabolism; glutathione biosynthesis; glutathione from L-cysteine and L-glutamate: step 1/2. Catalyzes the ATP-dependent ligation of L-glutamate and L-cysteine and participates in the first and rate-limiting step in glutathione biosynthesis. This chain is Glutamate--cysteine ligase (gcs1), found in Schizosaccharomyces pombe (strain 972 / ATCC 24843) (Fission yeast).